The sequence spans 32 residues: Periplasmic [NiFe] hydrogenase small subunit (32 aa).

[4Fe-4S] cluster-binding residues include cysteine 17 and cysteine 20.

It belongs to the [NiFe]/[NiFeSe] hydrogenase small subunit family. As to quaternary structure, heterodimer of a large and a small subunit. Requires [3Fe-4S] cluster as cofactor. The cofactor is [4Fe-4S] cluster.

Its subcellular location is the periplasm. The enzyme catalyses 2 Fe(III)-[cytochrome c3] + H2 = 2 Fe(II)-[cytochrome c3] + 2 H(+). The chain is Periplasmic [NiFe] hydrogenase small subunit (hydA) from Desulfovibrio multispirans.